The sequence spans 466 residues: Soluble pyridine nucleotide transhydrogenase (466 aa).

Position 36–45 (Glu36–Cys45) interacts with FAD.

Belongs to the class-I pyridine nucleotide-disulfide oxidoreductase family. FAD serves as cofactor.

The protein resides in the cytoplasm. The enzyme catalyses NAD(+) + NADPH = NADH + NADP(+). In terms of biological role, conversion of NADPH, generated by peripheral catabolic pathways, to NADH, which can enter the respiratory chain for energy generation. This is Soluble pyridine nucleotide transhydrogenase from Escherichia fergusonii (strain ATCC 35469 / DSM 13698 / CCUG 18766 / IAM 14443 / JCM 21226 / LMG 7866 / NBRC 102419 / NCTC 12128 / CDC 0568-73).